Consider the following 95-residue polypeptide: Phosphoribosyl-ATP pyrophosphatase (95 aa).

Belongs to the PRA-PH family.

It localises to the cytoplasm. It carries out the reaction 1-(5-phospho-beta-D-ribosyl)-ATP + H2O = 1-(5-phospho-beta-D-ribosyl)-5'-AMP + diphosphate + H(+). It functions in the pathway amino-acid biosynthesis; L-histidine biosynthesis; L-histidine from 5-phospho-alpha-D-ribose 1-diphosphate: step 2/9. The sequence is that of Phosphoribosyl-ATP pyrophosphatase from Methanosphaera stadtmanae (strain ATCC 43021 / DSM 3091 / JCM 11832 / MCB-3).